An 845-amino-acid chain; its full sequence is Protein P (845 aa).

Residues 1–179 (MPLSYQHFRK…FCGSPYSWEQ (179 aa)) are terminal protein domain (TP). Positions 180–348 (ELQHGRLVIK…YCLSHLVNLR (169 aa)) are spacer. Residues 226 to 245 (GLQPHQGPLASSQPGRSGSI) are disordered. Positions 349 to 692 (EDWGPCDEHG…YMNLYPVARQ (344 aa)) are polymerase/reverse transcriptase domain (RT). Positions 359 to 602 (EHHIRIPRTP…YSLNFMGYII (244 aa)) constitute a Reverse transcriptase domain. Mg(2+)-binding residues include Asp-431, Asp-553, and Asp-554.

This sequence belongs to the hepadnaviridae P protein family.

It catalyses the reaction DNA(n) + a 2'-deoxyribonucleoside 5'-triphosphate = DNA(n+1) + diphosphate. The catalysed reaction is Endonucleolytic cleavage to 5'-phosphomonoester.. Activated by host HSP70 and HSP40 in vitro to be able to bind the epsilon loop of the pgRNA. Because deletion of the RNase H region renders the protein partly chaperone-independent, the chaperones may be needed indirectly to relieve occlusion of the RNA-binding site by this domain. Inhibited by several reverse-transcriptase inhibitors: Lamivudine, Adefovir and Entecavir. In terms of biological role, multifunctional enzyme that converts the viral RNA genome into dsDNA in viral cytoplasmic capsids. This enzyme displays a DNA polymerase activity that can copy either DNA or RNA templates, and a ribonuclease H (RNase H) activity that cleaves the RNA strand of RNA-DNA heteroduplexes in a partially processive 3'- to 5'-endonucleasic mode. Neo-synthesized pregenomic RNA (pgRNA) are encapsidated together with the P protein, and reverse-transcribed inside the nucleocapsid. Initiation of reverse-transcription occurs first by binding the epsilon loop on the pgRNA genome, and is initiated by protein priming, thereby the 5'-end of (-)DNA is covalently linked to P protein. Partial (+)DNA is synthesized from the (-)DNA template and generates the relaxed circular DNA (RC-DNA) genome. After budding and infection, the RC-DNA migrates in the nucleus, and is converted into a plasmid-like covalently closed circular DNA (cccDNA). The activity of P protein does not seem to be necessary for cccDNA generation, and is presumably released from (+)DNA by host nuclear DNA repair machinery. The polypeptide is Protein P (Homo sapiens (Human)).